A 434-amino-acid chain; its full sequence is Trigger factor (434 aa).

One can recognise a PPIase FKBP-type domain in the interval 161–246 (EDRVTVDFNG…LKKVEERELP (86 aa)).

It belongs to the FKBP-type PPIase family. Tig subfamily.

It localises to the cytoplasm. The enzyme catalyses [protein]-peptidylproline (omega=180) = [protein]-peptidylproline (omega=0). In terms of biological role, involved in protein export. Acts as a chaperone by maintaining the newly synthesized protein in an open conformation. Functions as a peptidyl-prolyl cis-trans isomerase. This chain is Trigger factor, found in Proteus mirabilis (strain HI4320).